Consider the following 178-residue polypeptide: Large ribosomal subunit protein uL6 (178 aa).

This sequence belongs to the universal ribosomal protein uL6 family. In terms of assembly, part of the 50S ribosomal subunit.

In terms of biological role, this protein binds to the 23S rRNA, and is important in its secondary structure. It is located near the subunit interface in the base of the L7/L12 stalk, and near the tRNA binding site of the peptidyltransferase center. The polypeptide is Large ribosomal subunit protein uL6 (Streptococcus suis (strain 05ZYH33)).